The primary structure comprises 70 residues: Small ribosomal subunit protein bS21 (70 aa).

The protein belongs to the bacterial ribosomal protein bS21 family.

The polypeptide is Small ribosomal subunit protein bS21 (Cupriavidus pinatubonensis (strain JMP 134 / LMG 1197) (Cupriavidus necator (strain JMP 134))).